A 63-amino-acid polypeptide reads, in one-letter code: Protein CYSTEINE-RICH TRANSMEMBRANE MODULE 12 (63 aa).

A disordered region spans residues 1–34 (MQDMRDQNPPQGYPAAEQVSEQPGQDKKKKKPRF). The chain crosses the membrane as a helical span at residues 40 to 56 (KGDRGFIEGCLFALCCC).

The protein belongs to the CYSTM1 family. Homodimer and heterodimers. Binds weakly to CYSTM4, CYSTM6 and CYSTM7. Mostly expressed in roots, flowers and siliques and, to a lower extent, in stems and leaves.

The protein resides in the cell membrane. It localises to the cytoplasm. Involved in resistance to abiotic stress. This chain is Protein CYSTEINE-RICH TRANSMEMBRANE MODULE 12, found in Arabidopsis thaliana (Mouse-ear cress).